Here is a 461-residue protein sequence, read N- to C-terminus: Chromosomal replication initiator protein DnaA (461 aa).

The segment at 1 to 87 is domain I, interacts with DnaA modulators; the sequence is MAVSLWQQCI…IGSRPSAKPV (87 aa). Residues 87 to 124 are domain II; it reads VVQATAAIRPKPAASKAVEKPTFNAPQAEPAITANHRS. The interval 125-341 is domain III, AAA+ region; sequence NINPTYQFDN…GALNRVIANA (217 aa). Residues G169, G171, K172, and T173 each coordinate ATP. Residues 342 to 461 are domain IV, binds dsDNA; sequence NFTGRPITID…YANLIRTLSS (120 aa).

Belongs to the DnaA family. As to quaternary structure, oligomerizes as a right-handed, spiral filament on DNA at oriC.

Its subcellular location is the cytoplasm. Plays an essential role in the initiation and regulation of chromosomal replication. ATP-DnaA binds to the origin of replication (oriC) to initiate formation of the DNA replication initiation complex once per cell cycle. Binds the DnaA box (a 9 base pair repeat at the origin) and separates the double-stranded (ds)DNA. Forms a right-handed helical filament on oriC DNA; dsDNA binds to the exterior of the filament while single-stranded (ss)DNA is stabiized in the filament's interior. The ATP-DnaA-oriC complex binds and stabilizes one strand of the AT-rich DNA unwinding element (DUE), permitting loading of DNA polymerase. After initiation quickly degrades to an ADP-DnaA complex that is not apt for DNA replication. Binds acidic phospholipids. This Shewanella piezotolerans (strain WP3 / JCM 13877) protein is Chromosomal replication initiator protein DnaA.